The chain runs to 264 residues: Aminoglycoside 3'-phosphotransferase (264 aa).

The active-site Proton acceptor is aspartate 190.

It belongs to the aminoglycoside phosphotransferase family.

The catalysed reaction is kanamycin A + ATP = kanamycin 3'-phosphate + ADP + H(+). Resistance to kanamycin and structurally-related aminoglycosides, including amikacin. The polypeptide is Aminoglycoside 3'-phosphotransferase (aphA) (Enterococcus faecalis (Streptococcus faecalis)).